The primary structure comprises 473 residues: Glutathione reductase, mitochondrial (473 aa).

FAD-binding residues include Ser30 and Gly31. Ser30 serves as a coordination point for glutathione. Arg37 contacts glutathione. Positions 50, 57, 58, and 66 each coordinate FAD. The cysteines at positions 58 and 63 are disulfide-linked. Tyr114 contacts glutathione. Residue Ala130 participates in FAD binding. Positions 190, 193, 196, 213, 219, and 279 each coordinate NADP(+). Asp320 lines the FAD pocket. Position 326 (Leu326) interacts with NADP(+). Thr328 contacts FAD. Arg336 provides a ligand contact to glutathione. Residue Val359 participates in NADP(+) binding. His456 is an FAD binding site. Catalysis depends on His456, which acts as the Proton acceptor.

The protein belongs to the class-I pyridine nucleotide-disulfide oxidoreductase family. It depends on FAD as a cofactor. As to expression, expressed at all larval stages and in adults in intestine, vulva muscle, pharynx and some cells in the tail.

It localises to the cytoplasm. The protein localises to the mitochondrion. It catalyses the reaction 2 glutathione + NADP(+) = glutathione disulfide + NADPH + H(+). Its function is as follows. Catalyzes the reduction of glutathione disulfide (GSSG) to reduced glutathione (GSH). Constitutes the major mechanism to maintain a high GSH:GSSG ratio in the cytosol. Involved in resistance to oxidative stress and starvation. Together with thioredoxin reductase txtr-1, required for the reduction of disulfide groups in the cuticle during molting. In Caenorhabditis elegans, this protein is Glutathione reductase, mitochondrial.